The following is a 370-amino-acid chain: 4-hydroxy-3-methylbut-2-en-1-yl diphosphate synthase (flavodoxin) (370 aa).

Positions 271, 274, 306, and 313 each coordinate [4Fe-4S] cluster.

Belongs to the IspG family. Requires [4Fe-4S] cluster as cofactor.

The catalysed reaction is (2E)-4-hydroxy-3-methylbut-2-enyl diphosphate + oxidized [flavodoxin] + H2O + 2 H(+) = 2-C-methyl-D-erythritol 2,4-cyclic diphosphate + reduced [flavodoxin]. The protein operates within isoprenoid biosynthesis; isopentenyl diphosphate biosynthesis via DXP pathway; isopentenyl diphosphate from 1-deoxy-D-xylulose 5-phosphate: step 5/6. Converts 2C-methyl-D-erythritol 2,4-cyclodiphosphate (ME-2,4cPP) into 1-hydroxy-2-methyl-2-(E)-butenyl 4-diphosphate. The sequence is that of 4-hydroxy-3-methylbut-2-en-1-yl diphosphate synthase (flavodoxin) from Actinobacillus pleuropneumoniae serotype 5b (strain L20).